We begin with the raw amino-acid sequence, 1004 residues long: Ephrin type-A receptor 8 (1004 aa).

Positions 1-26 are cleaved as a signal peptide; the sequence is MAPARARLSPALWVVTAAAAATCVSA. The Extracellular portion of the chain corresponds to 27 to 541; it reads GRGEVNLLDT…KPRPRYDTRT (515 aa). Residues 30–208 enclose the Eph LBD domain; that stretch reads EVNLLDTSTI…YYKKCPAMVR (179 aa). Fibronectin type-III domains follow at residues 327 to 437 and 438 to 533; these read PPSA…TNQA and APSQ…TGKP. Asn-339, Asn-406, and Asn-431 each carry an N-linked (GlcNAc...) asparagine glycan. Residues 542 to 562 traverse the membrane as a helical segment; the sequence is IVWICLTLITGLVVLLLLLIC. A mediates interaction with ANKS1A and ANKS1B region spans residues 563 to 569; that stretch reads KKRHCGY. The Cytoplasmic portion of the chain corresponds to 563–1004; that stretch reads KKRHCGYSKA…SSTQGPRRHL (442 aa). Residues 588–643 are mediates interaction with PIK3CG and required for endocytosis; sequence APPPVFLPLNHPPGKFPETQFSAEPHTYEEPGRAGRSFTREIEASRIHIEKIIGSG. Tyr-615 bears the Phosphotyrosine; by autocatalysis mark. In terms of domain architecture, Protein kinase spans 634–895; it reads IHIEKIIGSG…HVVSVLDALV (262 aa). ATP contacts are provided by residues 640–648 and Lys-666; that span reads IGSGESGEV. Asp-759 acts as the Proton acceptor in catalysis. Phosphotyrosine; by autocatalysis is present on Tyr-838. One can recognise an SAM domain in the interval 929–993; it reads NGDLTVGDWL…LGSIQTMRAQ (65 aa). The short motif at 1002–1004 is the PDZ-binding element; sequence RHL.

The protein belongs to the protein kinase superfamily. Tyr protein kinase family. Ephrin receptor subfamily. Heterotetramer upon binding of the ligand. The heterotetramer is composed of an ephrin dimer and a receptor dimer. Oligomerization is probably required to induce biological responses. May also form heterodimers with other ephrin receptors. Interacts with FYN; possible downstream effector of EPHA8 in regulation of cell adhesion. Interacts with PIK3CG; regulates integrin-mediated cell adhesion to substrate. Interacts with TIAM1; regulates clathrin-mediated endocytosis of EPHA8. Interacts with ANKS1A and ANKS1B; EPHA8 kinase activity-independent but stimulated by EPHA8 ubiquitination. Post-translationally, phosphorylated. Phosphorylation is stimulated upon binding of its ligands including EFNA2, EFNA3 and EFNA5. Autophosphorylation on Tyr-615 is critical for association with FYN. Autophosphorylation on Tyr-838 modulates tyrosine kinase activity. Ubiquitinated. Ubiquitination by CBL regulates the receptor stability and activity through proteasomal degradation. ANKS1A prevents ubiquitination and degradation. As to expression, specifically expressed in the central nervous system.

Its subcellular location is the cell membrane. It is found in the cell projection. The protein localises to the early endosome membrane. It catalyses the reaction L-tyrosyl-[protein] + ATP = O-phospho-L-tyrosyl-[protein] + ADP + H(+). In terms of biological role, receptor tyrosine kinase which binds promiscuously GPI-anchored ephrin-A family ligands residing on adjacent cells, leading to contact-dependent bidirectional signaling into neighboring cells. The signaling pathway downstream of the receptor is referred to as forward signaling while the signaling pathway downstream of the ephrin ligand is referred to as reverse signaling. The GPI-anchored ephrin-A EFNA2, EFNA3, and EFNA5 are able to activate EPHA8 through phosphorylation. With EFNA5 may regulate integrin-mediated cell adhesion and migration on fibronectin substrate but also neurite outgrowth. During development of the nervous system also plays a role in axon guidance. Downstream effectors of the EPHA8 signaling pathway include FYN which promotes cell adhesion upon activation by EPHA8 and the MAP kinases in the stimulation of neurite outgrowth. The protein is Ephrin type-A receptor 8 (Epha8) of Mus musculus (Mouse).